The sequence spans 177 residues: Adenine phosphoribosyltransferase (177 aa).

Belongs to the purine/pyrimidine phosphoribosyltransferase family. As to quaternary structure, homodimer.

The protein resides in the cytoplasm. The catalysed reaction is AMP + diphosphate = 5-phospho-alpha-D-ribose 1-diphosphate + adenine. It participates in purine metabolism; AMP biosynthesis via salvage pathway; AMP from adenine: step 1/1. Catalyzes a salvage reaction resulting in the formation of AMP, that is energically less costly than de novo synthesis. The polypeptide is Adenine phosphoribosyltransferase (Prosthecochloris aestuarii (strain DSM 271 / SK 413)).